The primary structure comprises 277 residues: Phosphate import ATP-binding protein PstB (277 aa).

The ABC transporter domain maps to L31–I272. G63 to S70 lines the ATP pocket.

It belongs to the ABC transporter superfamily. Phosphate importer (TC 3.A.1.7) family. As to quaternary structure, the complex is composed of two ATP-binding proteins (PstB), two transmembrane proteins (PstC and PstA) (Potential). PstS is missing in this species.

It is found in the cell inner membrane. The catalysed reaction is phosphate(out) + ATP + H2O = ADP + 2 phosphate(in) + H(+). Part of the ABC transporter complex PstSACB involved in phosphate import. Responsible for energy coupling to the transport system. This is Phosphate import ATP-binding protein PstB from Pseudomonas aeruginosa (strain ATCC 15692 / DSM 22644 / CIP 104116 / JCM 14847 / LMG 12228 / 1C / PRS 101 / PAO1).